Consider the following 71-residue polypeptide: ATP synthase F(0) complex subunit e, mitochondrial (71 aa).

Residue lysine 34 is modified to N6-acetyllysine. The residue at position 68 (serine 68) is a Phosphoserine.

Belongs to the ATPase e subunit family. Component of the ATP synthase complex composed at least of ATP5F1A/subunit alpha, ATP5F1B/subunit beta, ATP5MC1/subunit c (homooctomer), MT-ATP6/subunit a, MT-ATP8/subunit 8, ATP5ME/subunit e, ATP5MF/subunit f, ATP5MG/subunit g, ATP5MK/subunit k, ATP5MJ/subunit j, ATP5F1C/subunit gamma, ATP5F1D/subunit delta, ATP5F1E/subunit epsilon, ATP5PF/subunit F6, ATP5PB/subunit b, ATP5PD/subunit d, ATP5PO/subunit OSCP. ATP synthase complex consists of a soluble F(1) head domain (subunits alpha(3) and beta(3)) - the catalytic core - and a membrane F(0) domain - the membrane proton channel (subunits c, a, 8, e, f, g, k and j). These two domains are linked by a central stalk (subunits gamma, delta, and epsilon) rotating inside the F1 region and a stationary peripheral stalk (subunits F6, b, d, and OSCP).

The protein localises to the mitochondrion. It is found in the mitochondrion inner membrane. Subunit e, of the mitochondrial membrane ATP synthase complex (F(1)F(0) ATP synthase or Complex V) that produces ATP from ADP in the presence of a proton gradient across the membrane which is generated by electron transport complexes of the respiratory chain. ATP synthase complex consist of a soluble F(1) head domain - the catalytic core - and a membrane F(1) domain - the membrane proton channel. These two domains are linked by a central stalk rotating inside the F(1) region and a stationary peripheral stalk. During catalysis, ATP synthesis in the catalytic domain of F(1) is coupled via a rotary mechanism of the central stalk subunits to proton translocation. In vivo, can only synthesize ATP although its ATP hydrolase activity can be activated artificially in vitro. Part of the complex F(0) domain. The chain is ATP synthase F(0) complex subunit e, mitochondrial from Pongo abelii (Sumatran orangutan).